A 179-amino-acid chain; its full sequence is ATP synthase subunit delta (179 aa).

It belongs to the ATPase delta chain family. In terms of assembly, F-type ATPases have 2 components, F(1) - the catalytic core - and F(0) - the membrane proton channel. F(1) has five subunits: alpha(3), beta(3), gamma(1), delta(1), epsilon(1). F(0) has three main subunits: a(1), b(2) and c(10-14). The alpha and beta chains form an alternating ring which encloses part of the gamma chain. F(1) is attached to F(0) by a central stalk formed by the gamma and epsilon chains, while a peripheral stalk is formed by the delta and b chains.

It is found in the cell inner membrane. In terms of biological role, f(1)F(0) ATP synthase produces ATP from ADP in the presence of a proton or sodium gradient. F-type ATPases consist of two structural domains, F(1) containing the extramembraneous catalytic core and F(0) containing the membrane proton channel, linked together by a central stalk and a peripheral stalk. During catalysis, ATP synthesis in the catalytic domain of F(1) is coupled via a rotary mechanism of the central stalk subunits to proton translocation. Functionally, this protein is part of the stalk that links CF(0) to CF(1). It either transmits conformational changes from CF(0) to CF(1) or is implicated in proton conduction. The polypeptide is ATP synthase subunit delta (Cupriavidus pinatubonensis (strain JMP 134 / LMG 1197) (Cupriavidus necator (strain JMP 134))).